A 220-amino-acid polypeptide reads, in one-letter code: Deoxyribose-phosphate aldolase (220 aa).

The active-site Proton donor/acceptor is D89. K151 functions as the Schiff-base intermediate with acetaldehyde in the catalytic mechanism. K180 acts as the Proton donor/acceptor in catalysis.

The protein belongs to the DeoC/FbaB aldolase family. DeoC type 1 subfamily.

It localises to the cytoplasm. The enzyme catalyses 2-deoxy-D-ribose 5-phosphate = D-glyceraldehyde 3-phosphate + acetaldehyde. It functions in the pathway carbohydrate degradation; 2-deoxy-D-ribose 1-phosphate degradation; D-glyceraldehyde 3-phosphate and acetaldehyde from 2-deoxy-alpha-D-ribose 1-phosphate: step 2/2. In terms of biological role, catalyzes a reversible aldol reaction between acetaldehyde and D-glyceraldehyde 3-phosphate to generate 2-deoxy-D-ribose 5-phosphate. The protein is Deoxyribose-phosphate aldolase of Lactococcus lactis subsp. lactis (strain IL1403) (Streptococcus lactis).